The chain runs to 384 residues: Autophagy-related protein 30 (384 aa).

The disordered stretch occupies residues 1–63 (MFSRKQVQKR…ASPGQLRPRT (63 aa)). Low complexity predominate over residues 13-27 (ELSSLHCSNSSNSLN). The span at 45 to 63 (RGNNRSDNVASPGQLRPRT) shows a compositional bias: polar residues. S112 bears the Phosphoserine mark. A disordered region spans residues 266-291 (VKHDKPSSPLPNYHNTLKQAPSSNSQ). Residues 278–291 (YHNTLKQAPSSNSQ) show a composition bias toward polar residues.

Interacts with ATG11, ATG17, ATG37, PEX3 and PEX14. Post-translationally, phosphorylation at Ser-112 is required for micro- and macropexophagy.

It localises to the vacuole lumen. It is found in the preautophagosomal structure. Its subcellular location is the peroxisome membrane. Its function is as follows. Acts as the peroxisome receptor for pexophagy. Required for both micropexophagy and macropexophagy, but not for the cytoplasm to vacuole transport (Cvt) or autophagy pathways. Required for functional micropexophagic apparatus (MIPA) and relocation of ATG11 to the peroxisome-sequestering arms of the vacuole. The protein is Autophagy-related protein 30 (ATG30) of Komagataella phaffii (strain GS115 / ATCC 20864) (Yeast).